Reading from the N-terminus, the 297-residue chain is ER membrane protein complex subunit 2 (297 aa).

N-acetylalanine is present on Ala-2. TPR repeat units follow at residues 87-120 (HRVK…DPTN), 155-188 (QEAW…NPYN), and 192-225 (CQQY…NNRN). Lys-255 bears the N6-acetyllysine mark.

The protein belongs to the EMC2 family. As to quaternary structure, component of the ER membrane protein complex (EMC).

It is found in the endoplasmic reticulum membrane. Functionally, part of the endoplasmic reticulum membrane protein complex (EMC) that enables the energy-independent insertion into endoplasmic reticulum membranes of newly synthesized membrane proteins. Preferentially accommodates proteins with transmembrane domains that are weakly hydrophobic or contain destabilizing features such as charged and aromatic residues. Involved in the cotranslational insertion of multi-pass membrane proteins in which stop-transfer membrane-anchor sequences become ER membrane spanning helices. It is also required for the post-translational insertion of tail-anchored/TA proteins in endoplasmic reticulum membranes. By mediating the proper cotranslational insertion of N-terminal transmembrane domains in an N-exo topology, with translocated N-terminus in the lumen of the ER, controls the topology of multi-pass membrane proteins like the G protein-coupled receptors. By regulating the insertion of various proteins in membranes, it is indirectly involved in many cellular processes. The chain is ER membrane protein complex subunit 2 from Bos taurus (Bovine).